Reading from the N-terminus, the 368-residue chain is Putative potassium channel KAT5 (368 aa).

The next 3 membrane-spanning stretches (helical) occupy residues 33 to 53 (WWHM…PFEL), 97 to 117 (LLNL…ARVE), and 132 to 152 (LLCV…WMVF). An intramembrane region (pore-forming) is located at residues 180-199 (CAVYWSITTLATVGYGDLHA). A helical transmembrane segment spans residues 206–226 (LFSIAFMLFNMGLTSYIIGNI). An a nucleoside 3',5'-cyclic phosphate-binding site is contributed by 225-344 (NITNLVVRET…CIVFSNFILV (120 aa)).

This sequence belongs to the potassium channel family. Plant (TC 1.A.1.4) subfamily.

Its subcellular location is the membrane. Putative inward-rectifying potassium channel. This is Putative potassium channel KAT5 from Oryza sativa subsp. japonica (Rice).